The sequence spans 752 residues: Phosphatidylinositol 4-phosphate 5-kinase 1 (752 aa).

MORN repeat units lie at residues 81–103, 104–126, 127–149, 150–172, 173–195, 196–218, and 219–241; these read YIGS…DGCM, YEGD…SGAT, YEGE…DGDT, YRGT…NGDF, YEGT…NGNQ, YTGE…NGNR, and YEGL…DGSS. The 400-residue stretch at 349–748 folds into the PIPK domain; it reads SKGHKKYDLM…RFRDFISRIF (400 aa). Positions 708-729 are activation loop; that stretch reads YDITKKIEHAYKSLQADPASIS.

Phosphorylation inactivates the enzyme. As to expression, expressed in the whole plant, preferentially in roots. Strongly expressed in meristematic tissues, namely procambial cell layers.

The catalysed reaction is a 1,2-diacyl-sn-glycero-3-phospho-(1D-myo-inositol 4-phosphate) + ATP = a 1,2-diacyl-sn-glycero-3-phospho-(1D-myo-inositol-4,5-bisphosphate) + ADP + H(+). Its function is as follows. Catalyzes the synthesis of phosphatidylinositol 4,5-bisphosphate and phosphatidylinositol 3,4-bisphosphate. The sequence is that of Phosphatidylinositol 4-phosphate 5-kinase 1 (PIP5K1) from Arabidopsis thaliana (Mouse-ear cress).